The primary structure comprises 87 residues: Small ribosomal subunit protein uS17 (87 aa).

It belongs to the universal ribosomal protein uS17 family. As to quaternary structure, part of the 30S ribosomal subunit.

One of the primary rRNA binding proteins, it binds specifically to the 5'-end of 16S ribosomal RNA. This Syntrophobacter fumaroxidans (strain DSM 10017 / MPOB) protein is Small ribosomal subunit protein uS17.